Reading from the N-terminus, the 453-residue chain is Bifunctional protein GlmU (453 aa).

The segment at 1-225 is pyrophosphorylase; it reads MNIVILAAGT…EWETLGVNSK (225 aa). Residues 6–9, Lys20, Gln71, 76–77, 98–100, Gly135, Glu150, Asn165, and Asn223 each bind UDP-N-acetyl-alpha-D-glucosamine; these read LAAG, GT, and YGD. A Mg(2+)-binding site is contributed by Asp100. Mg(2+) is bound at residue Asn223. Residues 226–246 are linker; it reads AQLAELERIHQRNVADALLVD. The tract at residues 247–453 is N-acetyltransferase; that stretch reads GVTLADPARV…GYVRPVKKKS (207 aa). UDP-N-acetyl-alpha-D-glucosamine contacts are provided by Arg329 and Lys347. His359 acts as the Proton acceptor in catalysis. Residues Tyr362 and Asn373 each coordinate UDP-N-acetyl-alpha-D-glucosamine. Residues Ala376, 382–383, Ser401, and Ala419 each bind acetyl-CoA; that span reads NY.

The protein in the N-terminal section; belongs to the N-acetylglucosamine-1-phosphate uridyltransferase family. In the C-terminal section; belongs to the transferase hexapeptide repeat family. As to quaternary structure, homotrimer. The cofactor is Mg(2+).

The protein resides in the cytoplasm. The enzyme catalyses alpha-D-glucosamine 1-phosphate + acetyl-CoA = N-acetyl-alpha-D-glucosamine 1-phosphate + CoA + H(+). It carries out the reaction N-acetyl-alpha-D-glucosamine 1-phosphate + UTP + H(+) = UDP-N-acetyl-alpha-D-glucosamine + diphosphate. The protein operates within nucleotide-sugar biosynthesis; UDP-N-acetyl-alpha-D-glucosamine biosynthesis; N-acetyl-alpha-D-glucosamine 1-phosphate from alpha-D-glucosamine 6-phosphate (route II): step 2/2. It participates in nucleotide-sugar biosynthesis; UDP-N-acetyl-alpha-D-glucosamine biosynthesis; UDP-N-acetyl-alpha-D-glucosamine from N-acetyl-alpha-D-glucosamine 1-phosphate: step 1/1. Its pathway is bacterial outer membrane biogenesis; LPS lipid A biosynthesis. In terms of biological role, catalyzes the last two sequential reactions in the de novo biosynthetic pathway for UDP-N-acetylglucosamine (UDP-GlcNAc). The C-terminal domain catalyzes the transfer of acetyl group from acetyl coenzyme A to glucosamine-1-phosphate (GlcN-1-P) to produce N-acetylglucosamine-1-phosphate (GlcNAc-1-P), which is converted into UDP-GlcNAc by the transfer of uridine 5-monophosphate (from uridine 5-triphosphate), a reaction catalyzed by the N-terminal domain. The sequence is that of Bifunctional protein GlmU from Burkholderia ambifaria (strain ATCC BAA-244 / DSM 16087 / CCUG 44356 / LMG 19182 / AMMD) (Burkholderia cepacia (strain AMMD)).